Reading from the N-terminus, the 188-residue chain is F-box only protein 36 (188 aa).

The F-box domain occupies 91 to 137 (FDYLERLSDRLLLKIICYLDLEDIASLSQTSSKFEKLCKSDLLWEQI).

As to quaternary structure, directly interacts with SKP1 and CUL1.

Functionally, substrate-recognition component of the SCF (SKP1-CUL1-F-box protein)-type E3 ubiquitin ligase complex. This Mus musculus (Mouse) protein is F-box only protein 36 (Fbxo36).